Here is an 85-residue protein sequence, read N- to C-terminus: Kunitz-type serine protease inhibitor homolog beta-bungarotoxin B3 chain (85 aa).

An N-terminal signal peptide occupies residues 1-24 (MSSGGLLLLLGLLTLWAELTPVSS). The 51-residue stretch at 31–81 (CDKPPDTRICQTVVRAFYYKPSEKRCVQFRYGGCKGNGNHFKSDHLCRCEC) folds into the BPTI/Kunitz inhibitor domain. Disulfide bonds link Cys-31–Cys-81, Cys-40–Cys-64, and Cys-56–Cys-77.

This sequence belongs to the venom Kunitz-type family. In terms of assembly, heterodimer; disulfide-linked. The A chain has phospholipase A2 activity and the B chain shows homology with the basic protease inhibitors. In terms of tissue distribution, expressed by the venom gland.

It is found in the secreted. Functionally, beta-bungarotoxin is a presynaptic neurotoxin of the venom. The B chain is homologous to venom basic protease inhibitors but has no protease inhibitor activity and is non-toxic. The chain is Kunitz-type serine protease inhibitor homolog beta-bungarotoxin B3 chain from Bungarus candidus (Malayan krait).